A 134-amino-acid polypeptide reads, in one-letter code: Small ribosomal subunit protein bS6 (134 aa).

A disordered region spans residues 103 to 134 (AAPVKSAEEGTEEVAAEAATEAPAETTTTVEG). Over residues 118-134 (AEAATEAPAETTTTVEG) the composition is skewed to low complexity.

This sequence belongs to the bacterial ribosomal protein bS6 family.

Functionally, binds together with bS18 to 16S ribosomal RNA. This Citrifermentans bemidjiense (strain ATCC BAA-1014 / DSM 16622 / JCM 12645 / Bem) (Geobacter bemidjiensis) protein is Small ribosomal subunit protein bS6.